A 257-amino-acid chain; its full sequence is UPF0246 protein ASA_3634 (257 aa).

The protein belongs to the UPF0246 family.

This is UPF0246 protein ASA_3634 from Aeromonas salmonicida (strain A449).